The primary structure comprises 170 residues: Negative modulator of initiation of replication (170 aa).

Residues 139–145 (NTNTGRK) are interaction with DNA.

Belongs to the SeqA family. As to quaternary structure, homodimer. Polymerizes to form helical filaments.

The protein resides in the cytoplasm. In terms of biological role, negative regulator of replication initiation, which contributes to regulation of DNA replication and ensures that replication initiation occurs exactly once per chromosome per cell cycle. Binds to pairs of hemimethylated GATC sequences in the oriC region, thus preventing assembly of replication proteins and re-initiation at newly replicated origins. Repression is relieved when the region becomes fully methylated. This Tolumonas auensis (strain DSM 9187 / NBRC 110442 / TA 4) protein is Negative modulator of initiation of replication.